The primary structure comprises 572 residues: Urease subunit alpha (572 aa).

One can recognise a Urease domain in the interval 133 to 572 (GGIDLHVHYI…TSLSQRYFLF (440 aa)). Positions 138, 140, and 221 each coordinate Ni(2+). Residue lysine 221 is modified to N6-carboxylysine. Histidine 223 provides a ligand contact to substrate. The Ni(2+) site is built by histidine 250 and histidine 276. The active-site Proton donor is the histidine 324. A Ni(2+)-binding site is contributed by aspartate 364.

The protein belongs to the metallo-dependent hydrolases superfamily. Urease alpha subunit family. As to quaternary structure, heterotrimer of UreA (gamma), UreB (beta) and UreC (alpha) subunits. Three heterotrimers associate to form the active enzyme. Requires Ni cation as cofactor. Carboxylation allows a single lysine to coordinate two nickel ions.

Its subcellular location is the cytoplasm. It carries out the reaction urea + 2 H2O + H(+) = hydrogencarbonate + 2 NH4(+). Its pathway is nitrogen metabolism; urea degradation; CO(2) and NH(3) from urea (urease route): step 1/1. In Streptococcus thermophilus (strain CNRZ 1066), this protein is Urease subunit alpha.